The sequence spans 85 residues: Large ribosomal subunit protein bL27 (85 aa).

This sequence belongs to the bacterial ribosomal protein bL27 family.

The protein is Large ribosomal subunit protein bL27 of Campylobacter hominis (strain ATCC BAA-381 / DSM 21671 / CCUG 45161 / LMG 19568 / NCTC 13146 / CH001A).